The chain runs to 103 residues: Large ribosomal subunit protein uL24 (103 aa).

The protein belongs to the universal ribosomal protein uL24 family. As to quaternary structure, part of the 50S ribosomal subunit.

One of two assembly initiator proteins, it binds directly to the 5'-end of the 23S rRNA, where it nucleates assembly of the 50S subunit. In terms of biological role, one of the proteins that surrounds the polypeptide exit tunnel on the outside of the subunit. This chain is Large ribosomal subunit protein uL24, found in Sinorhizobium medicae (strain WSM419) (Ensifer medicae).